The sequence spans 96 residues: Putative septation protein SpoVG (96 aa).

The protein belongs to the SpoVG family.

In terms of biological role, essential for sporulation. Interferes with or is a negative regulator of the pathway leading to asymmetric septation. In Priestia megaterium (Bacillus megaterium), this protein is Putative septation protein SpoVG.